Consider the following 402-residue polypeptide: Probable tRNA pseudouridine synthase tag-124 (402 aa).

D85 (nucleophile) is an active-site residue. Residues S383 to L402 are disordered.

It belongs to the tRNA pseudouridine synthase TruA family.

It catalyses the reaction a uridine in tRNA = a pseudouridine in tRNA. Formation of pseudouridine at position 38 and 39 in the anticodon stem and loop of transfer RNAs. This chain is Probable tRNA pseudouridine synthase tag-124 (tag-124), found in Caenorhabditis elegans.